Here is a 343-residue protein sequence, read N- to C-terminus: GTPase Obg (343 aa).

The region spanning 1–159 is the Obg domain; sequence MQFIDHATIC…RQLRLELKLL (159 aa). The 169-residue stretch at 160-328 folds into the OBG-type G domain; the sequence is AEVGLIGLPN…LLRLVWQWLD (169 aa). Residues 166 to 173, 191 to 195, 213 to 216, 280 to 283, and 309 to 311 each bind GTP; these read GLPNAGKS, FTTLV, DIPG, NKID, and SSA. Mg(2+) contacts are provided by Ser173 and Thr193.

The protein belongs to the TRAFAC class OBG-HflX-like GTPase superfamily. OBG GTPase family. Monomer. Requires Mg(2+) as cofactor.

The protein localises to the cytoplasm. Its function is as follows. An essential GTPase which binds GTP, GDP and possibly (p)ppGpp with moderate affinity, with high nucleotide exchange rates and a fairly low GTP hydrolysis rate. Plays a role in control of the cell cycle, stress response, ribosome biogenesis and in those bacteria that undergo differentiation, in morphogenesis control. This chain is GTPase Obg, found in Synechococcus elongatus (strain ATCC 33912 / PCC 7942 / FACHB-805) (Anacystis nidulans R2).